The following is a 128-amino-acid chain: MVGKHCILELYDCDKSKLDDEAFLRTTITTAAKRAGATLLNLITHRFEPQGVTGLALLAESHISIHTWPETGYAAVDVFTCGDHTMPEKACQHLRDELKAMNHALRSFLRETPAAVAELERTPECTPR.

Ser-61 serves as the catalytic Schiff-base intermediate with substrate; via pyruvic acid. Pyruvic acid (Ser); by autocatalysis is present on Ser-61. The active-site Proton acceptor; for processing activity is the His-66. The active-site Proton donor; for catalytic activity is the Cys-81.

It belongs to the prokaryotic AdoMetDC family. Type 1 subfamily. Heterotetramer of two alpha and two beta chains arranged as a dimer of alpha/beta heterodimers. It depends on pyruvate as a cofactor. In terms of processing, is synthesized initially as an inactive proenzyme. Formation of the active enzyme involves a self-maturation process in which the active site pyruvoyl group is generated from an internal serine residue via an autocatalytic post-translational modification. Two non-identical subunits are generated from the proenzyme in this reaction, and the pyruvate is formed at the N-terminus of the alpha chain, which is derived from the carboxyl end of the proenzyme. The post-translation cleavage follows an unusual pathway, termed non-hydrolytic serinolysis, in which the side chain hydroxyl group of the serine supplies its oxygen atom to form the C-terminus of the beta chain, while the remainder of the serine residue undergoes an oxidative deamination to produce ammonia and the pyruvoyl group blocking the N-terminus of the alpha chain.

It carries out the reaction S-adenosyl-L-methionine + H(+) = S-adenosyl 3-(methylsulfanyl)propylamine + CO2. It functions in the pathway amine and polyamine biosynthesis; S-adenosylmethioninamine biosynthesis; S-adenosylmethioninamine from S-adenosyl-L-methionine: step 1/1. Catalyzes the decarboxylation of S-adenosylmethionine to S-adenosylmethioninamine (dcAdoMet), the propylamine donor required for the synthesis of the polyamines spermine and spermidine from the diamine putrescine. The sequence is that of S-adenosylmethionine decarboxylase proenzyme from Synechococcus sp. (strain WH7803).